Here is a 171-residue protein sequence, read N- to C-terminus: Adenine phosphoribosyltransferase (171 aa).

This sequence belongs to the purine/pyrimidine phosphoribosyltransferase family. In terms of assembly, homodimer.

It localises to the cytoplasm. The enzyme catalyses AMP + diphosphate = 5-phospho-alpha-D-ribose 1-diphosphate + adenine. It functions in the pathway purine metabolism; AMP biosynthesis via salvage pathway; AMP from adenine: step 1/1. In terms of biological role, catalyzes a salvage reaction resulting in the formation of AMP, that is energically less costly than de novo synthesis. In Citrifermentans bemidjiense (strain ATCC BAA-1014 / DSM 16622 / JCM 12645 / Bem) (Geobacter bemidjiensis), this protein is Adenine phosphoribosyltransferase.